Reading from the N-terminus, the 421-residue chain is Imidazolonepropionase (421 aa).

Fe(3+) is bound by residues histidine 80 and histidine 82. Zn(2+)-binding residues include histidine 80 and histidine 82. Arginine 89, tyrosine 152, and histidine 185 together coordinate 4-imidazolone-5-propanoate. Tyrosine 152 lines the N-formimidoyl-L-glutamate pocket. Histidine 249 contributes to the Fe(3+) binding site. Histidine 249 lines the Zn(2+) pocket. Glutamate 252 provides a ligand contact to 4-imidazolone-5-propanoate. Aspartate 324 serves as a coordination point for Fe(3+). A Zn(2+)-binding site is contributed by aspartate 324. Residues asparagine 326 and glycine 328 each coordinate N-formimidoyl-L-glutamate. Residue serine 329 participates in 4-imidazolone-5-propanoate binding.

Belongs to the metallo-dependent hydrolases superfamily. HutI family. Requires Zn(2+) as cofactor. It depends on Fe(3+) as a cofactor.

Its subcellular location is the cytoplasm. It carries out the reaction 4-imidazolone-5-propanoate + H2O = N-formimidoyl-L-glutamate. Its pathway is amino-acid degradation; L-histidine degradation into L-glutamate; N-formimidoyl-L-glutamate from L-histidine: step 3/3. Functionally, catalyzes the hydrolytic cleavage of the carbon-nitrogen bond in imidazolone-5-propanoate to yield N-formimidoyl-L-glutamate. It is the third step in the universal histidine degradation pathway. The chain is Imidazolonepropionase from Bacillus velezensis (strain DSM 23117 / BGSC 10A6 / LMG 26770 / FZB42) (Bacillus amyloliquefaciens subsp. plantarum).